The primary structure comprises 148 residues: Fibroblast growth factor 1 (148 aa).

Residues 1 to 11 constitute a propeptide that is removed on maturation; it reads EITTFAALTER. A heparin-binding site is contributed by asparagine 29. The interval 123–139 is heparin-binding; the sequence is KKNGKTKLGSRTHFGQK.

It belongs to the heparin-binding growth factors family.

The protein resides in the secreted. It is found in the cytoplasm. The protein localises to the cell cortex. It localises to the cytosol. Its subcellular location is the nucleus. In terms of biological role, plays an important role in the regulation of cell survival, cell division, angiogenesis, cell differentiation and cell migration. Functions as a potent mitogen in vitro. Acts as a ligand for FGFR1 and integrins. Binds to FGFR1 in the presence of heparin leading to FGFR1 dimerization and activation via sequential autophosphorylation on tyrosine residues which act as docking sites for interacting proteins, leading to the activation of several signaling cascades. Binds to integrins. Its binding to integrins and subsequent ternary complex formation with integrins and FGFR1 are essential for FGF1 signaling. This chain is Fibroblast growth factor 1 (fgf1), found in Cynops pyrrhogaster (Japanese fire-bellied newt).